The following is a 682-amino-acid chain: Potassium-transporting ATPase ATP-binding subunit (682 aa).

Helical transmembrane passes span 34–54, 58–78, 219–239, and 254–274; these read PVMF…LAMV, IAGS…TVLF, IALT…TATL, and VLVA…LSAI. The 4-aspartylphosphate intermediate role is filled by Asp-307. Residues Asp-344, Glu-348, 377 to 384, and Lys-395 each bind ATP; that span reads FTAQSRMS. Mg(2+)-binding residues include Asp-518 and Asp-522. Helical transmembrane passes span 588–608, 616–636, and 662–682; these read FAII…LNVM, AILS…PLAL, and LVVP…LGLA.

It belongs to the cation transport ATPase (P-type) (TC 3.A.3) family. Type IA subfamily. In terms of assembly, the system is composed of three essential subunits: KdpA, KdpB and KdpC.

The protein resides in the cell inner membrane. The catalysed reaction is K(+)(out) + ATP + H2O = K(+)(in) + ADP + phosphate + H(+). Part of the high-affinity ATP-driven potassium transport (or Kdp) system, which catalyzes the hydrolysis of ATP coupled with the electrogenic transport of potassium into the cytoplasm. This subunit is responsible for energy coupling to the transport system and for the release of the potassium ions to the cytoplasm. This is Potassium-transporting ATPase ATP-binding subunit from Salmonella typhimurium (strain LT2 / SGSC1412 / ATCC 700720).